A 917-amino-acid chain; its full sequence is MLX-interacting protein (917 aa).

Residues 1–72 (MAADVFMCSP…AGPGREEPPR (72 aa)) are disordered. Residue Ala-2 is modified to N-acetylalanine. A phosphoserine mark is found at Ser-9, Ser-33, and Ser-39. The segment covering 27–37 (PEDDDDSDTDE) has biased composition (acidic residues). Residues 47-57 (ATSARAHASAA) show a composition bias toward low complexity. A required for cytoplasmic localization region spans residues 73 to 327 (RQQIIHSGHF…PLQPNLDFMD (255 aa)). Positions 322–445 (NLDFMDTFEP…LLSPGPAPAP (124 aa)) are transactivation domain. Disordered regions lie at residues 347-402 (LPPP…CERT) and 632-711 (SHST…TDPK). A compositionally biased stretch (polar residues) spans 378-388 (LPNSLITSSAA). Over residues 632-643 (SHSTSSQPSPVS) the composition is skewed to low complexity. Ser-667 is subject to Phosphoserine. Positions 670 to 685 (VPATGSSRDCPNSGQA) are enriched in polar residues. Positions 686 to 704 (SPCPSEQSPSPQSPQNNCS) are enriched in low complexity. In terms of domain architecture, bHLH spans 717-767 (KNRQKHISAEQKRRFNIRMGFNTLNSLISNNSKQTSHAITLQKTMEYITKL). The tract at residues 767–788 (LQQERMQMQEEARRLREEIEEL) is leucine-zipper. The interval 830–879 (WKFWIFSMIIKPLFESFKGMVSTSSLEEFHRTALSWLDQHCSLPVLRPMV) is mediates heterotypic interactions between MLXIP and MLX and is required for cytoplasmic localization. The disordered stretch occupies residues 897-917 (SQLPEQASEAVTRMGKRSGES).

In terms of assembly, efficient DNA binding requires dimerization with another bHLH protein. Binds DNA as a homodimer or a heterodimer with MLX/TCFL4.

It localises to the cytoplasm. It is found in the nucleus. The protein resides in the mitochondrion outer membrane. Its function is as follows. Binds DNA as a heterodimer with MLX/TCFL4 and activates transcription. Binds to the canonical E box sequence 5'-CACGTG-3'. Plays a role in transcriptional activation of glycolytic target genes. Involved in glucose-responsive gene regulation. Regulates transcription in response to changes in cellular carbohydrate abundance such as occurs during fasting to feeding metabolic transition. Refeeding stimulates MLXIPL/ChREBP transcription factor, leading to increased BCKDK to PPM1K expression ratio, phosphorylation and activation of ACLY that ultimately results in the generation of malonyl-CoA and oxaloacetate immediate substrates of de novo lipogenesis and gluconeogenesis, respectively. The chain is MLX-interacting protein from Mus musculus (Mouse).